Reading from the N-terminus, the 278-residue chain is S-formylglutathione hydrolase YeiG (278 aa).

Active-site charge relay system residues include S145, D223, and H256.

It belongs to the esterase D family.

It catalyses the reaction S-formylglutathione + H2O = formate + glutathione + H(+). Functionally, serine hydrolase involved in the detoxification of formaldehyde. Hydrolyzes S-formylglutathione to glutathione and formate. The protein is S-formylglutathione hydrolase YeiG (yeiG) of Escherichia coli (strain UTI89 / UPEC).